A 338-amino-acid chain; its full sequence is Anthranilate phosphoribosyltransferase (338 aa).

5-phospho-alpha-D-ribose 1-diphosphate is bound by residues Gly-81, 84–85, Thr-89, 91–94, 109–117, and Ser-121; these read GD, NIST, and KHGNRSMVS. Residue Gly-81 participates in anthranilate binding. Ser-93 provides a ligand contact to Mg(2+). Anthranilate is bound at residue Asn-112. Residue Arg-167 coordinates anthranilate. 2 residues coordinate Mg(2+): Asp-226 and Glu-227.

It belongs to the anthranilate phosphoribosyltransferase family. Homodimer. Mg(2+) is required as a cofactor.

It catalyses the reaction N-(5-phospho-beta-D-ribosyl)anthranilate + diphosphate = 5-phospho-alpha-D-ribose 1-diphosphate + anthranilate. It participates in amino-acid biosynthesis; L-tryptophan biosynthesis; L-tryptophan from chorismate: step 2/5. Catalyzes the transfer of the phosphoribosyl group of 5-phosphorylribose-1-pyrophosphate (PRPP) to anthranilate to yield N-(5'-phosphoribosyl)-anthranilate (PRA). This chain is Anthranilate phosphoribosyltransferase, found in Acidithiobacillus ferrooxidans (strain ATCC 23270 / DSM 14882 / CIP 104768 / NCIMB 8455) (Ferrobacillus ferrooxidans (strain ATCC 23270)).